The chain runs to 351 residues: Phosphate acyltransferase (351 aa).

It belongs to the PlsX family. As to quaternary structure, homodimer. Probably interacts with PlsY.

Its subcellular location is the cytoplasm. The enzyme catalyses a fatty acyl-[ACP] + phosphate = an acyl phosphate + holo-[ACP]. The protein operates within lipid metabolism; phospholipid metabolism. In terms of biological role, catalyzes the reversible formation of acyl-phosphate (acyl-PO(4)) from acyl-[acyl-carrier-protein] (acyl-ACP). This enzyme utilizes acyl-ACP as fatty acyl donor, but not acyl-CoA. The sequence is that of Phosphate acyltransferase from Maricaulis maris (strain MCS10) (Caulobacter maris).